We begin with the raw amino-acid sequence, 264 residues long: 3-methyl-2-oxobutanoate hydroxymethyltransferase (264 aa).

Mg(2+) is bound by residues aspartate 45 and aspartate 84. Residues 45 to 46 (DS), aspartate 84, and lysine 113 contribute to the 3-methyl-2-oxobutanoate site. Glutamate 115 is a Mg(2+) binding site. Residue glutamate 182 is the Proton acceptor of the active site.

Belongs to the PanB family. As to quaternary structure, homodecamer; pentamer of dimers. It depends on Mg(2+) as a cofactor.

The protein localises to the cytoplasm. The catalysed reaction is 3-methyl-2-oxobutanoate + (6R)-5,10-methylene-5,6,7,8-tetrahydrofolate + H2O = 2-dehydropantoate + (6S)-5,6,7,8-tetrahydrofolate. Its pathway is cofactor biosynthesis; (R)-pantothenate biosynthesis; (R)-pantoate from 3-methyl-2-oxobutanoate: step 1/2. In terms of biological role, catalyzes the reversible reaction in which hydroxymethyl group from 5,10-methylenetetrahydrofolate is transferred onto alpha-ketoisovalerate to form ketopantoate. In Helicobacter hepaticus (strain ATCC 51449 / 3B1), this protein is 3-methyl-2-oxobutanoate hydroxymethyltransferase.